The primary structure comprises 571 residues: Proline--tRNA ligase (571 aa).

This sequence belongs to the class-II aminoacyl-tRNA synthetase family. ProS type 1 subfamily. As to quaternary structure, homodimer.

Its subcellular location is the cytoplasm. It carries out the reaction tRNA(Pro) + L-proline + ATP = L-prolyl-tRNA(Pro) + AMP + diphosphate. Catalyzes the attachment of proline to tRNA(Pro) in a two-step reaction: proline is first activated by ATP to form Pro-AMP and then transferred to the acceptor end of tRNA(Pro). As ProRS can inadvertently accommodate and process non-cognate amino acids such as alanine and cysteine, to avoid such errors it has two additional distinct editing activities against alanine. One activity is designated as 'pretransfer' editing and involves the tRNA(Pro)-independent hydrolysis of activated Ala-AMP. The other activity is designated 'posttransfer' editing and involves deacylation of mischarged Ala-tRNA(Pro). The misacylated Cys-tRNA(Pro) is not edited by ProRS. This chain is Proline--tRNA ligase, found in Shewanella baltica (strain OS195).